The primary structure comprises 167 residues: SsrA-binding protein (167 aa).

Residues 139–167 (QAHDKRHAEKEREWQRDKQRIMRAHNRNA) are disordered. Over residues 144–158 (RHAEKEREWQRDKQR) the composition is skewed to basic and acidic residues.

Belongs to the SmpB family.

The protein resides in the cytoplasm. In terms of biological role, required for rescue of stalled ribosomes mediated by trans-translation. Binds to transfer-messenger RNA (tmRNA), required for stable association of tmRNA with ribosomes. tmRNA and SmpB together mimic tRNA shape, replacing the anticodon stem-loop with SmpB. tmRNA is encoded by the ssrA gene; the 2 termini fold to resemble tRNA(Ala) and it encodes a 'tag peptide', a short internal open reading frame. During trans-translation Ala-aminoacylated tmRNA acts like a tRNA, entering the A-site of stalled ribosomes, displacing the stalled mRNA. The ribosome then switches to translate the ORF on the tmRNA; the nascent peptide is terminated with the 'tag peptide' encoded by the tmRNA and targeted for degradation. The ribosome is freed to recommence translation, which seems to be the essential function of trans-translation. The polypeptide is SsrA-binding protein (Xylella fastidiosa (strain M12)).